A 369-amino-acid polypeptide reads, in one-letter code: Putative agmatine deiminase (369 aa).

C361 functions as the Amidino-cysteine intermediate in the catalytic mechanism.

It belongs to the agmatine deiminase family.

The catalysed reaction is agmatine + H2O = N-carbamoylputrescine + NH4(+). The chain is Putative agmatine deiminase from Streptococcus mutans serotype c (strain ATCC 700610 / UA159).